The sequence spans 146 residues: Mitochondrial pyruvate carrier 3 (146 aa).

Residues 1–20 (MSASAFNFAFRRFWNSETGP) constitute a mitochondrion transit peptide. The next 3 helical transmembrane spans lie at 23–39 (VHFWAPTLKWGLVFAGL), 55–71 (LSLLATALIWTRWSFVI), and 78–94 (LASVNFFLGCTAGYHLT).

This sequence belongs to the mitochondrial pyruvate carrier (MPC) (TC 2.A.105) family. The functional 150 kDa pyruvate import complex is a heteromer of MPC1 and either MPC2 or MPC3.

It is found in the mitochondrion. The protein localises to the mitochondrion inner membrane. Its function is as follows. Mediates the uptake of pyruvate into mitochondria. The protein is Mitochondrial pyruvate carrier 3 of Saccharomyces cerevisiae (strain ATCC 204508 / S288c) (Baker's yeast).